The primary structure comprises 903 residues: MLIKLLTKVFGSRNDRTLRRMRKVVDVINRMEPEFEKLSDDELKGKTAEFRARLEKGESLENLLPEAFATVREASKRVFAMRHFDVQLLGGMVLNERCIAEMRTGEGKTLTATLPAYLNALTGRGVHVVTVNDYLAQRDAENNRPLFEFLGLSVGINLPGMPAPVKRQAYAADITYGTNNEYGFDYLRDNMAFSPEERVQRKLHYALVDEVDSILIDEARTPLIISGPAEDSSELYIKVNKLIPKLIRQEKEDSETFQGEGHFSVDEKSRQVNLTERGLVLIEQLLSEASLMEEGESLYSPTNIMLMHHVTAALRAHALFTRDVDYIVKDGEVIIVDEHTGRTMQGRRWSDGLHQAVEAKEGVEIQNENQTLASITFQNYFRLYEKLAGMTGTADTEAFEFSSIYKLDTIVVPTNRPMIRNDLPDLVYMTEAEKIEAIIEDIRERTGKGQPVLVGTISIEKSELVSRELTNAGIEHNVLNAKFHAMEADIIAQAGQASAVTIATNMAGRGTDIVLGGSWQAEIAKLTEPTEAQIEEIKAAWQERHDRVLAAGGLHIIGTERHESRRIDNQLRGRSGRQGDAGSSRFYLSMEDSLMRIFASDRVTSMMRKLGMKPGEAIEHPWVTKAIANAQRKVESRNFDIRKQLLEYDDVANDQRRAIYAQRNDLLDVSDVSETIGSIREDVFKATIDAYIPPQSLEEMWDVEGLQQRLVTDFDLELPIKEWLDKEPELHEETLRERILEQAVEVYKRKEEIVGIEMMRNFEKGIMLQTLDMLWKEHLAAMDYLRQGIHLRGYAQKDPKQEYKRESFAMFASMLESLKYEVISTLSKVQVRLPEEVEALEQQRRAEAERLAKQQQLSHEVEKGALMSTTEAQIASGARKVGRNDPCPCGSGKKYKHCHGRLQ.

ATP is bound by residues Gln-87, 105 to 109 (GEGKT), and Asp-512. Residues Cys-887, Cys-889, Cys-898, and His-899 each coordinate Zn(2+).

It belongs to the SecA family. In terms of assembly, monomer and homodimer. Part of the essential Sec protein translocation apparatus which comprises SecA, SecYEG and auxiliary proteins SecDF-YajC and YidC. The cofactor is Zn(2+).

It is found in the cell inner membrane. It localises to the cytoplasm. It catalyses the reaction ATP + H2O + cellular proteinSide 1 = ADP + phosphate + cellular proteinSide 2.. In terms of biological role, part of the Sec protein translocase complex. Interacts with the SecYEG preprotein conducting channel. Has a central role in coupling the hydrolysis of ATP to the transfer of proteins into and across the cell membrane, serving both as a receptor for the preprotein-SecB complex and as an ATP-driven molecular motor driving the stepwise translocation of polypeptide chains across the membrane. The chain is Protein translocase subunit SecA from Photorhabdus laumondii subsp. laumondii (strain DSM 15139 / CIP 105565 / TT01) (Photorhabdus luminescens subsp. laumondii).